We begin with the raw amino-acid sequence, 509 residues long: MSSHIQIFDTTLRDGEQTPGVNFTFDERLRIALQLEKWGVDVIEAGFPASSTGSFKSVQAIAQTLTTTAVCGLARCKKSDIDAVYEATKDAAKPVVHVFIATSPIHLEHKLKMSQEDVLASIKEHVTYAKQLFDVVQFSPEDATRTELPFLVKCVQTAVDAGATVINIPDTVGYSYHDEYAHIFKTLTESVTSSNEIIYSAHCHDDLGMAVSNSLAAIEGGARRIEGTVNGIGERAGNAALEEVALALYIRNDHYGAQTALNLEETKKTSDLISRYAGIRVPRNKAIVGQNAFSHESGIHQDGVLKHRETYEIMTPQLVGVSTTELPLGKLSGKHAFSKKLKALGYDIDKEAQIDLFKQFKAIADKKKSVSDRDIHAIIQGSEHEHQALYKLETLQLQYVSSGLQSAVVVIKDKEGHIYQDSSIGTGSIVAIYNAVDRIFQKETELIDYRINSVTEGTDAQAEVHVNLLIEGKTVNGFGIDHDILQASCKAYVEAHAKFAAENVEKVGN.

Positions 5-267 constitute a Pyruvate carboxyltransferase domain; it reads IQIFDTTLRD…QTALNLEETK (263 aa). Asp-14, His-202, His-204, and Asn-238 together coordinate Mn(2+). The segment at 391–509 is regulatory domain; sequence KLETLQLQYV…AAENVEKVGN (119 aa).

This sequence belongs to the alpha-IPM synthase/homocitrate synthase family. LeuA type 1 subfamily. As to quaternary structure, homodimer. Mn(2+) is required as a cofactor.

Its subcellular location is the cytoplasm. The catalysed reaction is 3-methyl-2-oxobutanoate + acetyl-CoA + H2O = (2S)-2-isopropylmalate + CoA + H(+). It functions in the pathway amino-acid biosynthesis; L-leucine biosynthesis; L-leucine from 3-methyl-2-oxobutanoate: step 1/4. Catalyzes the condensation of the acetyl group of acetyl-CoA with 3-methyl-2-oxobutanoate (2-ketoisovalerate) to form 3-carboxy-3-hydroxy-4-methylpentanoate (2-isopropylmalate). This chain is 2-isopropylmalate synthase, found in Staphylococcus aureus (strain MRSA252).